We begin with the raw amino-acid sequence, 155 residues long: UPF0303 protein lp_3613 (155 aa).

The protein belongs to the UPF0303 family.

The sequence is that of UPF0303 protein lp_3613 from Lactiplantibacillus plantarum (strain ATCC BAA-793 / NCIMB 8826 / WCFS1) (Lactobacillus plantarum).